Reading from the N-terminus, the 340-residue chain is N-acetyl-gamma-glutamyl-phosphate reductase (340 aa).

Residue Cys148 is part of the active site.

The protein belongs to the NAGSA dehydrogenase family. Type 1 subfamily.

Its subcellular location is the cytoplasm. It carries out the reaction N-acetyl-L-glutamate 5-semialdehyde + phosphate + NADP(+) = N-acetyl-L-glutamyl 5-phosphate + NADPH + H(+). Its pathway is amino-acid biosynthesis; L-arginine biosynthesis; N(2)-acetyl-L-ornithine from L-glutamate: step 3/4. Functionally, catalyzes the NADPH-dependent reduction of N-acetyl-5-glutamyl phosphate to yield N-acetyl-L-glutamate 5-semialdehyde. This chain is N-acetyl-gamma-glutamyl-phosphate reductase, found in Methanosarcina mazei (strain ATCC BAA-159 / DSM 3647 / Goe1 / Go1 / JCM 11833 / OCM 88) (Methanosarcina frisia).